Consider the following 121-residue polypeptide: Group 1 truncated hemoglobin (121 aa).

Met1 carries the post-translational modification N-acetylmethionine. His73 provides a ligand contact to heme.

The protein belongs to the truncated hemoglobin family. Group I subfamily. Monomer. The cofactor is heme.

In Tetrahymena pyriformis, this protein is Group 1 truncated hemoglobin.